The sequence spans 523 residues: Thiamine pathway transporter THI73 (523 aa).

Topologically, residues 1 to 79 (MKNMSQRSMD…LSPKVLRKVD (79 aa)) are cytoplasmic. The helical transmembrane segment at 80–100 (LFILPFLCCTYLLMFLDKALL) threads the bilayer. At 101–118 (NYAASMGIKDHLKGNEFS) the chain is on the extracellular side. Residues 119–139 (NLGTIFSAAYIFMEPVVTYLI) traverse the membrane as a helical segment. Residues 140-141 (QK) lie on the Cytoplasmic side of the membrane. Residues 142-162 (FPISKILGTFITVWGIVLACH) traverse the membrane as a helical segment. Residues 163–176 (AACKTYASLMVVRT) are Extracellular-facing. The helical transmembrane segment at 177–197 (LLGLFESSSAVGCIAISGMYY) threads the bilayer. Over 198 to 207 (TKSEQSARIG) the chain is Cytoplasmic. Residues 208-228 (FWATQAGTGYIVGGLISFGFL) traverse the membrane as a helical segment. At 229–239 (HYHGTAFTSWQ) the chain is on the extracellular side. Residues 240 to 260 (IMFLVVGLVTVAFGVLTFLYL) form a helical membrane-spanning segment. The Cytoplasmic segment spans residues 261–312 (PDNVTNAWFLNKEEKIQVVEHIRANQTGLETKKFKKQQVKELFLHDKFTWPM). A helical membrane pass occupies residues 313 to 333 (LLLTACSQISTGAIGTFSVTI). The Extracellular portion of the chain corresponds to 334 to 345 (TGTFGFDKYETA). A helical membrane pass occupies residues 346 to 366 (LLQLPIGAITAMIILITTQML). Topologically, residues 367–371 (SRWGH) are cytoplasmic. A helical transmembrane segment spans residues 372–392 (ITLITTSMYIPAIIGCIVLIS). Topologically, residues 393-400 (LPLSHKIG) are extracellular. A helical membrane pass occupies residues 401 to 421 (NLFSLYLLYSGSCVITNIYIW). The Cytoplasmic segment spans residues 422-432 (NSCNTSGYTKR). Residues 433 to 452 (VFRNAITMIVYNVSCIIAPQ) traverse the membrane as a helical segment. The Extracellular segment spans residues 453–466 (MFRAYSAPRYIPAK). The helical transmembrane segment at 467–487 (IALLVTQCVCVPLQLYIGYIC) threads the bilayer. At 488–523 (KKENEKRDKEQEGQERKKYQFLDLTDIENRNFRYIY) the chain is on the cytoplasmic side.

Belongs to the major facilitator superfamily. Allantoate permease family.

The protein localises to the endoplasmic reticulum membrane. It is found in the cell membrane. Its function is as follows. Transports either thiamine or, rather, a related metabolite involved in the thiamine biosynthesis pathway. This Saccharomyces cerevisiae (strain ATCC 204508 / S288c) (Baker's yeast) protein is Thiamine pathway transporter THI73 (THI73).